The sequence spans 476 residues: MAMETTSQDSQVIMGRYKLGRLLGRGTFAKVYKAYKLATGEAVAIKVFDKEAVQRSGTVEQVKREVDVMRRVHHRHVIRLHEVMATRSRIYFVMEYASGGELFTRLSRSPRFPEPVARRYFQQLITAVEFCHSRGVYHRDLKPENLLLDARGDLKVTDFGLSALDGGLRGDGLLHTTCGTPAYVAPEVLLKRGYDGAKADIWSCGVILFVLLAGYLPFNETNLVILYRNITESNYRCPPWFSVEARKLLARLLDPNPKTRITISKIMDRPWFQQATCPLGDMSLVASAPSVLLARKEASQQHDDEEDDGFAREKKKRSNVIMSSPVIDVRPSSMNAFDIISRSRGLDLSKMFDAEERRSEARFSTRETTTAIVSKLEEIAEAGRFSFKLKEKGRVELEGSQDGRKGALAIEAEIFKVAPEVHVVEVRKTGGDSPDFRDFYKQELKPSLGDMVWAWQGGDSPPLVPAAGRRPITKRS.

Residues 17–272 (YKLGRLLGRG…ISKIMDRPWF (256 aa)) form the Protein kinase domain. Residues 23 to 31 (LGRGTFAKV) and K46 contribute to the ATP site. D140 functions as the Proton acceptor in the catalytic mechanism. The tract at residues 158–187 (DFGLSALDGGLRGDGLLHTTCGTPAYVAPE) is activation loop. Residues 296–315 (KEASQQHDDEEDDGFAREKK) form a disordered region. In terms of domain architecture, NAF spans 299–353 (SQQHDDEEDDGFAREKKKRSNVIMSSPVIDVRPSSMNAFDIISRSRGLDLSKMFD). The segment at 358-387 (RSEARFSTRETTTAIVSKLEEIAEAGRFSF) is PPI.

The protein belongs to the protein kinase superfamily. CAMK Ser/Thr protein kinase family. SNF1 subfamily. Mn(2+) is required as a cofactor.

It catalyses the reaction L-seryl-[protein] + ATP = O-phospho-L-seryl-[protein] + ADP + H(+). The enzyme catalyses L-threonyl-[protein] + ATP = O-phospho-L-threonyl-[protein] + ADP + H(+). CIPK serine-threonine protein kinases interact with CBL proteins. Binding of a CBL protein to the regulatory NAF domain of CIPK protein lead to the activation of the kinase in a calcium-dependent manner. The polypeptide is CBL-interacting protein kinase 30 (CIPK30) (Oryza sativa subsp. japonica (Rice)).